The sequence spans 231 residues: 7-cyano-7-deazaguanine synthase (231 aa).

ATP is bound at residue 8–18 (LSGGLDSATAA). Cys-189, Cys-197, Cys-200, and Cys-203 together coordinate Zn(2+).

It belongs to the QueC family. Zn(2+) is required as a cofactor.

It carries out the reaction 7-carboxy-7-deazaguanine + NH4(+) + ATP = 7-cyano-7-deazaguanine + ADP + phosphate + H2O + H(+). It participates in purine metabolism; 7-cyano-7-deazaguanine biosynthesis. In terms of biological role, catalyzes the ATP-dependent conversion of 7-carboxy-7-deazaguanine (CDG) to 7-cyano-7-deazaguanine (preQ(0)). This Synechococcus elongatus (strain ATCC 33912 / PCC 7942 / FACHB-805) (Anacystis nidulans R2) protein is 7-cyano-7-deazaguanine synthase.